We begin with the raw amino-acid sequence, 187 residues long: Endoribonuclease YbeY (187 aa).

The Zn(2+) site is built by histidine 148, histidine 152, and histidine 158.

Belongs to the endoribonuclease YbeY family. Zn(2+) serves as cofactor.

The protein localises to the cytoplasm. In terms of biological role, single strand-specific metallo-endoribonuclease involved in late-stage 70S ribosome quality control and in maturation of the 3' terminus of the 16S rRNA. In Ralstonia nicotianae (strain ATCC BAA-1114 / GMI1000) (Ralstonia solanacearum), this protein is Endoribonuclease YbeY.